A 145-amino-acid polypeptide reads, in one-letter code: Basic phospholipase A2 S2-22 (145 aa).

The N-terminal stretch at 1–19 (MYPAHLLVLLAVCVSLLGA) is a signal peptide. The propeptide occupies 20 to 27 (SDIPPQPL). 7 cysteine pairs are disulfide-bonded: Cys38/Cys99, Cys54/Cys144, Cys56/Cys72, Cys71/Cys127, Cys78/Cys120, Cys88/Cys113, and Cys106/Cys118. 3 residues coordinate Ca(2+): Tyr55, Gly57, and Gly59. His75 is a catalytic residue. Asp76 contributes to the Ca(2+) binding site. The active site involves Asp121.

The protein belongs to the phospholipase A2 family. Group I subfamily. D49 sub-subfamily. Requires Ca(2+) as cofactor. In terms of tissue distribution, expressed by the venom gland.

It localises to the secreted. It carries out the reaction a 1,2-diacyl-sn-glycero-3-phosphocholine + H2O = a 1-acyl-sn-glycero-3-phosphocholine + a fatty acid + H(+). In terms of biological role, snake venom phospholipase A2 (PLA2) that inhibits collagen-induced platelet aggregation. PLA2 catalyzes the calcium-dependent hydrolysis of the 2-acyl groups in 3-sn-phosphoglycerides. This chain is Basic phospholipase A2 S2-22, found in Austrelaps superbus (Lowland copperhead snake).